The primary structure comprises 584 residues: Peroxynitrite isomerase THAP4 (584 aa).

The segment at 1–85 (MVICCAAANC…LKPTAVPSIF (85 aa)) adopts a THAP-type zinc-finger fold. The segment at 84 to 330 (IFHLAEKKRR…EAVQSEHSDA (247 aa)) is disordered. Residues 89 to 104 (EKKRRAGGHGRPRRRD) show a composition bias toward basic residues. A compositionally biased stretch (low complexity) spans 122–138 (GKAAAGSPSSSSASPMA). Over residues 158–178 (AARETAGQERGRQPLEGRAED) the composition is skewed to basic and acidic residues. The segment covering 190–208 (GEAGTGAEDAGEEGATPAD) has biased composition (low complexity). The HCFC1-binding motif (HBM) motif lies at 236–239 (LHSY). Ser-240 carries the post-translational modification Phosphoserine. A compositionally biased stretch (basic and acidic residues) spans 248-267 (ERPAVPREPVERKRLRRDAE). The segment at 422-584 (PPKMSPVVEP…LHVTYKKVTP (163 aa)) is nitrobindin. Positions 451 and 574 each coordinate heme b.

This sequence in the C-terminal section; belongs to the nitrobindin family. In terms of assembly, homodimer. It depends on heme b as a cofactor.

It is found in the cytoplasm. It localises to the nucleus. It catalyses the reaction peroxynitrite = nitrate. It functions in the pathway nitrogen metabolism. Heme-binding protein able to scavenge peroxynitrite and to protect free L-tyrosine against peroxynitrite-mediated nitration, by acting as a peroxynitrite isomerase that converts peroxynitrite to nitrate. Therefore, this protein likely plays a role in peroxynitrite sensing and in the detoxification of reactive nitrogen and oxygen species (RNS and ROS, respectively). Is able to bind nitric oxide (NO) in vitro, but may act as a sensor of peroxynitrite levels in vivo, possibly modulating the transcriptional activity residing in the N-terminal region. This chain is Peroxynitrite isomerase THAP4, found in Bos taurus (Bovine).